The following is a 508-amino-acid chain: UBX domain-containing protein 4 (508 aa).

The interval 1 to 200 is interaction with UBQLN1; that stretch reads MLWFQGAIPA…PAEDLNIRVE (200 aa). The Cytoplasmic portion of the chain corresponds to 1 to 413; that stretch reads MLWFQGAIPA…VHSSSGDIWT (413 aa). Polar residues-rich tracts occupy residues 117–151 and 160–187; these read SETSVANGSQSESSVSTPSASFEPNNTCENSQSRN and TSDTKSDTATGGESAGHATSSQEPSGCS. The disordered stretch occupies residues 117–196; it reads SETSVANGSQ…SDQRPAEDLN (80 aa). The UBX domain maps to 315–393; that stretch reads ERSTVARIQF…ELAPSASVVL (79 aa). The stretch at 414–434 is an intramembrane region; that stretch reads LLGTVLYPFLAIWRLISNFLF. At 435 to 508 the chain is on the cytoplasmic side; the sequence is SNPPPTQTSV…TWNGNSTQQM (74 aa). The interval 440 to 508 is disordered; it reads TQTSVRVTSS…TWNGNSTQQM (69 aa). A compositionally biased stretch (polar residues) spans 441-458; sequence QTSVRVTSSEPPNPASSS. Residues 459-491 show a composition bias toward basic and acidic residues; the sequence is KSEKREPVRKRVLEKRGDDFKKEGKIYRLRTQD. Thr-489 is subject to Phosphothreonine. The span at 498–508 shows a compositional bias: polar residues; the sequence is NTWNGNSTQQM.

Directly interacts with VCP. Interacts with UBQLN1. Forms a complex with VCP and UBQLN1. Expressed in many tissues, including heart, brain, placenta, lung, liver, skeletal muscle, kidney and pancreas. Accumulates in Alzheimer disease-afflicted brains (at protein level).

It localises to the endoplasmic reticulum membrane. It is found in the nucleus envelope. Involved in endoplasmic reticulum-associated protein degradation (ERAD). Acts as a platform to recruit both UBQLN1 and VCP to the ER during ERAD. The polypeptide is UBX domain-containing protein 4 (UBXN4) (Homo sapiens (Human)).